The chain runs to 180 residues: MADSEEWLEEWLTVGKIVGVQGLQGELRVNPASDFPERFTVPGPRWVRSKGSPPREMQLKTGRQLPGKSLFVVRLDSVDNRDAAEALVGSDWMVPADDRPQLGEGEFHLLDLVGLEARLSPDSDPIGTVTDLISGGNDLLEIKRTDGSKLLIPFVEAIVPEVHLKDGWLLLTPPPGLMDL.

The PRC barrel domain maps to 104–177; it reads EGEFHLLDLV…WLLLTPPPGL (74 aa).

Belongs to the RimM family. In terms of assembly, binds ribosomal protein uS19.

The protein localises to the cytoplasm. Functionally, an accessory protein needed during the final step in the assembly of 30S ribosomal subunit, possibly for assembly of the head region. Essential for efficient processing of 16S rRNA. May be needed both before and after RbfA during the maturation of 16S rRNA. It has affinity for free ribosomal 30S subunits but not for 70S ribosomes. The chain is Ribosome maturation factor RimM from Synechococcus sp. (strain CC9902).